We begin with the raw amino-acid sequence, 254 residues long: Thiazole synthase (254 aa).

Lys-95 (schiff-base intermediate with DXP) is an active-site residue. Residues Gly-156, 182–183 (AG), and 204–205 (NT) each bind 1-deoxy-D-xylulose 5-phosphate.

It belongs to the ThiG family. In terms of assembly, homotetramer. Forms heterodimers with either ThiH or ThiS.

Its subcellular location is the cytoplasm. The enzyme catalyses [ThiS sulfur-carrier protein]-C-terminal-Gly-aminoethanethioate + 2-iminoacetate + 1-deoxy-D-xylulose 5-phosphate = [ThiS sulfur-carrier protein]-C-terminal Gly-Gly + 2-[(2R,5Z)-2-carboxy-4-methylthiazol-5(2H)-ylidene]ethyl phosphate + 2 H2O + H(+). It participates in cofactor biosynthesis; thiamine diphosphate biosynthesis. Functionally, catalyzes the rearrangement of 1-deoxy-D-xylulose 5-phosphate (DXP) to produce the thiazole phosphate moiety of thiamine. Sulfur is provided by the thiocarboxylate moiety of the carrier protein ThiS. In vitro, sulfur can be provided by H(2)S. In Shewanella sp. (strain W3-18-1), this protein is Thiazole synthase.